A 1253-amino-acid polypeptide reads, in one-letter code: Elongator complex protein 1 (1253 aa).

Residues 830-1253 form a mediates dimerization region; sequence VDVNMLFDHA…KPFEKLSILI (424 aa). The span at 1126-1141 shows a compositional bias: polar residues; it reads YTKSSNSSKMTRNTSK. The interval 1126-1153 is disordered; sequence YTKSSNSSKMTRNTSKNNRRLERKRARG. The tract at residues 1137 to 1155 is required for binding to tRNA; the sequence is RNTSKNNRRLERKRARGKK. Basic residues predominate over residues 1142–1153; the sequence is NNRRLERKRARG.

This sequence belongs to the ELP1/IKA1 family. As to quaternary structure, homodimer. Component of the elongator complex.

It is found in the cytoplasm. The protein operates within tRNA modification; 5-methoxycarbonylmethyl-2-thiouridine-tRNA biosynthesis. In terms of biological role, component of the elongator complex, a multiprotein complex which is required for multiple tRNA modifications, including mcm5U (5-methoxycarbonylmethyl uridine), mcm5s2U (5-methoxycarbonylmethyl-2-thiouridine), and ncm5U (5-carbamoylmethyl uridine). The elongator complex catalyzes formation of carboxymethyluridine in the wobble base at position 34 in tRNAs. ELP1 binds to tRNA, mediating interaction of the elongator complex with tRNA. The sequence is that of Elongator complex protein 1 from Schizosaccharomyces pombe (strain 972 / ATCC 24843) (Fission yeast).